Reading from the N-terminus, the 257-residue chain is Imidazole glycerol phosphate synthase subunit HisF (257 aa).

Active-site residues include Asp-11 and Asp-130.

It belongs to the HisA/HisF family. Heterodimer of HisH and HisF.

It localises to the cytoplasm. The enzyme catalyses 5-[(5-phospho-1-deoxy-D-ribulos-1-ylimino)methylamino]-1-(5-phospho-beta-D-ribosyl)imidazole-4-carboxamide + L-glutamine = D-erythro-1-(imidazol-4-yl)glycerol 3-phosphate + 5-amino-1-(5-phospho-beta-D-ribosyl)imidazole-4-carboxamide + L-glutamate + H(+). The protein operates within amino-acid biosynthesis; L-histidine biosynthesis; L-histidine from 5-phospho-alpha-D-ribose 1-diphosphate: step 5/9. IGPS catalyzes the conversion of PRFAR and glutamine to IGP, AICAR and glutamate. The HisF subunit catalyzes the cyclization activity that produces IGP and AICAR from PRFAR using the ammonia provided by the HisH subunit. This is Imidazole glycerol phosphate synthase subunit HisF from Pseudoalteromonas atlantica (strain T6c / ATCC BAA-1087).